Consider the following 568-residue polypeptide: Periplasmic trehalase (568 aa).

The signal sequence occupies residues 1–38; sequence MPHAPARSGDAMSAAAPPCCTSLLGLSLSMFVAPCALA. Substrate contacts are provided by residues Arg169, 176–177, Asn213, 222–224, 294–296, and Gly327; these read WD, RSQ, and RPE. Catalysis depends on proton donor/acceptor residues Asp329 and Glu511. Glu526 contributes to the substrate binding site.

Belongs to the glycosyl hydrolase 37 family.

It is found in the periplasm. The catalysed reaction is alpha,alpha-trehalose + H2O = alpha-D-glucose + beta-D-glucose. In terms of biological role, provides the cells with the ability to utilize trehalose at high osmolarity by splitting it into glucose molecules that can subsequently be taken up by the phosphotransferase-mediated uptake system. The polypeptide is Periplasmic trehalase (Xanthomonas campestris pv. campestris (strain 8004)).